The primary structure comprises 134 residues: ATP synthase epsilon chain (134 aa).

This sequence belongs to the ATPase epsilon chain family. As to quaternary structure, F-type ATPases have 2 components, CF(1) - the catalytic core - and CF(0) - the membrane proton channel. CF(1) has five subunits: alpha(3), beta(3), gamma(1), delta(1), epsilon(1). CF(0) has three main subunits: a, b and c.

The protein localises to the cell membrane. In terms of biological role, produces ATP from ADP in the presence of a proton gradient across the membrane. This chain is ATP synthase epsilon chain (atpC), found in Priestia megaterium (strain ATCC 12872 / QMB1551) (Bacillus megaterium).